The chain runs to 364 residues: Histidinol-phosphate aminotransferase (364 aa).

Position 226 is an N6-(pyridoxal phosphate)lysine (Lys-226).

The protein belongs to the class-II pyridoxal-phosphate-dependent aminotransferase family. Histidinol-phosphate aminotransferase subfamily. Homodimer. Requires pyridoxal 5'-phosphate as cofactor.

The catalysed reaction is L-histidinol phosphate + 2-oxoglutarate = 3-(imidazol-4-yl)-2-oxopropyl phosphate + L-glutamate. The protein operates within amino-acid biosynthesis; L-histidine biosynthesis; L-histidine from 5-phospho-alpha-D-ribose 1-diphosphate: step 7/9. The chain is Histidinol-phosphate aminotransferase from Campylobacter jejuni subsp. doylei (strain ATCC BAA-1458 / RM4099 / 269.97).